The chain runs to 281 residues: Proteasome subunit beta 2 (281 aa).

Residues 1 to 53 (MEANTRSTGRLPAAFLTPGSSSFMDFLSEHQPEILPGNRQLPPTQGVIEAPHG) constitute a propeptide, removed in mature form; by autocatalysis. Thr-54 functions as the Nucleophile in the catalytic mechanism.

The protein belongs to the peptidase T1B family. In terms of assembly, the 20S proteasome core is composed of 14 alpha and 14 beta subunits that assemble into four stacked heptameric rings, resulting in a barrel-shaped structure. The two inner rings, each composed of seven catalytic beta subunits, are sandwiched by two outer rings, each composed of seven alpha subunits. The catalytic chamber with the active sites is on the inside of the barrel. Has a gated structure, the ends of the cylinder being occluded by the N-termini of the alpha-subunits. Is capped by the proteasome-associated ATPase, ARC.

It localises to the cytoplasm. It carries out the reaction Cleavage of peptide bonds with very broad specificity.. It participates in protein degradation; proteasomal Pup-dependent pathway. Its activity is regulated as follows. The formation of the proteasomal ATPase ARC-20S proteasome complex, likely via the docking of the C-termini of ARC into the intersubunit pockets in the alpha-rings, may trigger opening of the gate for substrate entry. Interconversion between the open-gate and close-gate conformations leads to a dynamic regulation of the 20S proteasome proteolysis activity. Functionally, component of the proteasome core, a large protease complex with broad specificity involved in protein degradation. The protein is Proteasome subunit beta 2 of Streptomyces avermitilis (strain ATCC 31267 / DSM 46492 / JCM 5070 / NBRC 14893 / NCIMB 12804 / NRRL 8165 / MA-4680).